A 362-amino-acid chain; its full sequence is tRNA-specific 2-thiouridylase MnmA (362 aa).

ATP contacts are provided by residues 9–16 and Met35; that span reads GMSGGVDS. An interaction with target base in tRNA region spans residues 95 to 97; it reads NPD. The Nucleophile role is filled by Cys100. Cys100 and Cys197 are disulfide-bonded. Gly124 contacts ATP. Residues 147–149 are interaction with tRNA; that stretch reads KDQ. Cys197 (cysteine persulfide intermediate) is an active-site residue. Residues 309–310 are interaction with tRNA; it reads RY.

The protein belongs to the MnmA/TRMU family.

It is found in the cytoplasm. The catalysed reaction is S-sulfanyl-L-cysteinyl-[protein] + uridine(34) in tRNA + AH2 + ATP = 2-thiouridine(34) in tRNA + L-cysteinyl-[protein] + A + AMP + diphosphate + H(+). In terms of biological role, catalyzes the 2-thiolation of uridine at the wobble position (U34) of tRNA, leading to the formation of s(2)U34. The protein is tRNA-specific 2-thiouridylase MnmA of Cupriavidus pinatubonensis (strain JMP 134 / LMG 1197) (Cupriavidus necator (strain JMP 134)).